The chain runs to 834 residues: Copper-exporting P-type ATPase (834 aa).

2 consecutive HMA domains span residues 3 to 64 (QTID…YDAS) and 99 to 162 (DSQQ…YGAE). Cu(+) contacts are provided by Cys-14, Cys-17, Cys-110, and Cys-113. Transmembrane regions (helical) follow at residues 187-207 (WQAI…MIGD), 218-238 (LWLV…GHFY), 254-274 (TLVA…NLWP), 284-304 (LYYE…MLEA), 438-458 (AVFV…WYFF), and 464-484 (IVYT…CALG). Asp-523 acts as the 4-aspartylphosphate intermediate in catalysis. Residues Asp-720 and Asp-724 each coordinate Mg(2+). A run of 2 helical transmembrane segments spans residues 779–799 (LGAF…LWPF) and 801–821 (GTLL…ITVV).

This sequence belongs to the cation transport ATPase (P-type) (TC 3.A.3) family. Type IB subfamily.

Its subcellular location is the cell inner membrane. It localises to the cytoplasm. It catalyses the reaction Cu(+)(in) + ATP + H2O = Cu(+)(out) + ADP + phosphate + H(+). In terms of biological role, involved in Cu(+) export. Probably also encodes a cytoplasmic copper chaperone CopA(Z) that is produced by programmed ribosomal frameshifting. This Escherichia coli O157:H7 protein is Copper-exporting P-type ATPase (copA).